The sequence spans 172 residues: L-amino acid oxidase (172 aa).

44–47 (GPMR) contributes to the FAD binding site. R47 and H103 together coordinate substrate.

The protein belongs to the flavin monoamine oxidase family. FIG1 subfamily. In terms of assembly, heterodimer; non-covalently linked. FAD is required as a cofactor. Post-translationally, N-glycosylated. As to expression, expressed by the venom gland.

It localises to the secreted. It catalyses the reaction an L-alpha-amino acid + O2 + H2O = a 2-oxocarboxylate + H2O2 + NH4(+). The enzyme catalyses L-leucine + O2 + H2O = 4-methyl-2-oxopentanoate + H2O2 + NH4(+). The catalysed reaction is L-phenylalanine + O2 + H2O = 3-phenylpyruvate + H2O2 + NH4(+). It carries out the reaction L-tryptophan + O2 + H2O = indole-3-pyruvate + H2O2 + NH4(+). It catalyses the reaction L-methionine + O2 + H2O = 4-methylsulfanyl-2-oxobutanoate + H2O2 + NH4(+). The enzyme catalyses L-isoleucine + O2 + H2O = (S)-3-methyl-2-oxopentanoate + H2O2 + NH4(+). The catalysed reaction is L-arginine + O2 + H2O = 5-guanidino-2-oxopentanoate + H2O2 + NH4(+). It carries out the reaction L-tyrosine + O2 + H2O = 3-(4-hydroxyphenyl)pyruvate + H2O2 + NH4(+). Its activity is regulated as follows. Activity is increased by Mn(2+) ions. Inhibited by Zn(2+), Ni(2+), Co(2+), Cu(2+) and Al(3+). No significant activity change by Na(+), K(+), Ca(2+), Mg(2+) and Ba(2+) ions. Both isoform are completely inhibited by L-Cys and reduced glutathione. O-phenanthroline, beta-mercaptoethanol and PMSF completely inhibit the enzymatic activity of LAAOII, but have no activity on LAAOI. Iodoacetic acid inhibits the enzymatic activity of LAAOII by 46% but has no effect on the LAAOI activity. In terms of biological role, catalyzes an oxidative deamination of predominantly hydrophobic and aromatic L-amino acids, thus producing hydrogen peroxide that may contribute to the diverse toxic effects of this enzyme. Shows high specificity for L-Arg, L-Met, L-Phe, L-Leu, L-Tyr, L-Ile and L-Trp, low specificity for L-Val, L-Ala, L-Asn, L-Gln, and no specificity for L-Pro, L-Ser, L-Thr, L-Cys, L-Gly and L-Asp. Exhibits diverse biological activities, such as hemorrhage, hemolysis, edema, antibacterial and antiparasitic activities, as well as regulation of platelet aggregation. Its effect on platelets is controversial, since it either induces aggregation or inhibits agonist-induced aggregation. These different effects are probably due to different experimental conditions. This chain is L-amino acid oxidase, found in Cerastes cerastes (Horned desert viper).